Consider the following 612-residue polypeptide: MSAPILTSVAWPYANGPRHIGHVAGFGVPSDVFARYQRMRGRDVLMVSGTDEHGTPLLVQAEKEGVSVQQLADTYNKQIVEDLAGLGLSYDLFTRTTTRNHYAIVQELFTTLYSNGYMVKQTTLGAISPSTGRTLPDRYIEGTCPICGAPGARGDQCDTCGNQLDPADLIDSVSKINGETPKFVETEHFLLDLPALADALGEWLESRQDWRPNVLKFSLNILKDIKPRAMTRDIDWGVPVPLEGWADNKFKKLYVWFDAVVGYLSASIEWAHRIGDPDAWKKWWTNPEAKSYYFMGKDNITFHSQIWPAEMLGYRGLGSRGGTEGKLGDLQLPTEVVSSEYLTMSGSKFSSSKGVVIYVQDFLREFGPDPLRYFIAVAGPENNDTDFTWDEFVRRNNNELANSWGNLINRTVSMAAKNFGEVPDISGLELTDDDNALLDLAEKTFDIVADNIEHSRFRAGINEAMHVVGEANAYIAAQEPWKLAKDEDQRDRLAVVLHTALQVVSDCNVLLTPYLPHAAQKVHETLGRTGEWAAMPRIDEVTDDTPVELMGVGLPEEGRTYHVITGEYSHQQAAWKRIPIEAGTTLKKPKPIFAKLDPELAETGPEWAPVVH.

A 'HIGH' region motif is present at residues 12 to 22 (PYANGPRHIGH). Cys144, Cys147, Cys157, and Cys160 together coordinate Zn(2+). The 'KMSKS' region signature appears at 348–352 (KFSSS). Residue Ser351 participates in ATP binding.

Belongs to the class-I aminoacyl-tRNA synthetase family. MetG type 1 subfamily. As to quaternary structure, monomer. The cofactor is Zn(2+).

The protein localises to the cytoplasm. It catalyses the reaction tRNA(Met) + L-methionine + ATP = L-methionyl-tRNA(Met) + AMP + diphosphate. In terms of biological role, is required not only for elongation of protein synthesis but also for the initiation of all mRNA translation through initiator tRNA(fMet) aminoacylation. The polypeptide is Methionine--tRNA ligase (Corynebacterium kroppenstedtii (strain DSM 44385 / JCM 11950 / CIP 105744 / CCUG 35717)).